Consider the following 1782-residue polypeptide: Vitellogenin (1782 aa).

The N-terminal stretch at 1-15 (MKLFVLAAIIAAVSS) is a signal peptide. The region spanning 34–812 (WQVGKQYRYE…SEDSLLPKDF (779 aa)) is the Vitellogenin domain. Disordered regions lie at residues 333–367 (HYESSSSSSSSESHEFNFPEQHEHPHQSNQRSRRS) and 379–406 (VLKKRNSESSSGSSSSSADSSSTYINDD). Basic and acidic residues predominate over residues 344–358 (ESHEFNFPEQHEHPH). Positions 386 to 400 (ESSSGSSSSSADSSS) are enriched in low complexity. N-linked (GlcNAc...) asparagine glycans are attached at residues N569, N587, N1357, N1463, and N1596. The region spanning 1449 to 1638 (PYCSIDGTRI…AYSLNEENSD (190 aa)) is the VWFD domain. Residues C1451 and C1602 are joined by a disulfide bond.

As to quaternary structure, heterotetramer of two heavy and two light chains. In terms of processing, glycosylated and phosphorylated. Detected in oocytes (at protein level). Produced by the fat body, where it is cleaved before being secreted into hemolymph. Sequestered then by a single class of receptor mediated endocytosis in the ovary.

The protein localises to the secreted. Its subcellular location is the cytoplasm. It is found in the cytoplasmic granule. Its function is as follows. Precursor of the egg-yolk proteins that are sources of nutrients during embryonic development. The protein is Vitellogenin (VG) of Bombyx mori (Silk moth).